The primary structure comprises 139 residues: D-ribose pyranase (139 aa).

His-20 acts as the Proton donor in catalysis. Residues Asp-28, His-106, and 128–130 (YAN) each bind substrate.

The protein belongs to the RbsD / FucU family. RbsD subfamily. Homodecamer.

Its subcellular location is the cytoplasm. The enzyme catalyses beta-D-ribopyranose = beta-D-ribofuranose. The protein operates within carbohydrate metabolism; D-ribose degradation; D-ribose 5-phosphate from beta-D-ribopyranose: step 1/2. Catalyzes the interconversion of beta-pyran and beta-furan forms of D-ribose. The sequence is that of D-ribose pyranase from Vibrio campbellii (strain ATCC BAA-1116).